The chain runs to 333 residues: Trans-enoyl reductase apdC (333 aa).

45–48 is a binding site for NADP(+); it reads FDAK. Residue 131-138 participates in substrate binding; the sequence is VGLATVGM. Residues 167–170, Tyr185, and 232–233 each bind NADP(+); these read SPHN and LD. 252-256 is a substrate binding site; that stretch reads SVTMY. 321 to 322 serves as a coordination point for NADP(+); that stretch reads VS.

Belongs to the zinc-containing alcohol dehydrogenase family. As to quaternary structure, monomer.

The protein operates within secondary metabolite biosynthesis. Its function is as follows. Trans-enoyl reductase; part of the gene cluster that mediates the biosynthesis of aspyridones. The polyketide-amino acid backbone preaspyridone A is first assembled by the PKS-NRPS hybrid apdA. The assembly of preaspyridone A is initiated by loading of malonyl-CoA onto apdA, followed by decarboxylation to yield the acetyl starter unit. The growing polyketide chain then elongates into a tetraketide. The adpA PKS module catalyzes three Claisen condensations, as well as beta-keto processing and methylation. Alpha-methylation step during polyketide synthesis is a prerequisite and a key checkpoint for chain transfer between PKS and NRPS modules. The downstream NRPS module contains the condensation (C), adenylation (A), and thiolation (T) domains and catalyzes the incorporation of tyrosine via the formation of the L-tyrosinyl-thioester and the amide linkage between L-tyrosinyl-thioester and the tetraketide. The bimodular assembly line is terminated with a reductase (R) domain that facilitates formation and release of the tetramic acid product. Because apdA lacks a designated enoylreductase (ER) domain, the required activity is provided the enoyl reductase apdC. ApdC appears to operate with different stereoselectivity in different PKS cycle. Combined with apdC, apdA is proposed to synthesize preaspyridone A via about 20 enzymatic steps. A number of oxidative steps performed successively by the cytochrome P450 monooxygenases apdE and apdB are required for the conversion of preaspyridone A to aspyridone A. The cytochrome P450 monooxygenase apdE is responsible for the oxidative dephenylation of preaspyridone A. Finally, the predicted FAD-dependent monooxygenase apdD and the acyl-CoA dehydrogenase apdG may be involved in the transformation of aspyridone A into aspyridone B. The chain is Trans-enoyl reductase apdC from Emericella nidulans (strain FGSC A4 / ATCC 38163 / CBS 112.46 / NRRL 194 / M139) (Aspergillus nidulans).